Consider the following 100-residue polypeptide: uncharacterized protein (100 aa).

The disordered stretch occupies residues 78–100 (KPYRTESGTSSSNRMMLPPRQHV).

This is an uncharacterized protein from Caenorhabditis elegans.